Here is a 362-residue protein sequence, read N- to C-terminus: Somatostatin receptor type 5 (362 aa).

Residues 1–10 show a composition bias toward polar residues; it reads MEPLSLTSTP. The disordered stretch occupies residues 1-24; it reads MEPLSLTSTPSWNASAASSSSHNW. At 1–35 the chain is on the extracellular side; the sequence is MEPLSLTSTPSWNASAASSSSHNWSLVDPVSPMGA. Residues 11–24 are compositionally biased toward low complexity; it reads SWNASAASSSSHNW. 2 N-linked (GlcNAc...) asparagine glycosylation sites follow: Asn-13 and Asn-23. The chain crosses the membrane as a helical span at residues 36 to 63; sequence RAVLVPVLYLLVCTVGLGGNTLVIYVVL. Topologically, residues 64–73 are cytoplasmic; sequence RYAKMKTVTN. Residues 74–99 form a helical membrane-spanning segment; the sequence is VYILNLAVADVLFMLGLPFLATQNAV. Topologically, residues 100–110 are extracellular; it reads SYWPFGSFLCR. Cys-109 and Cys-184 form a disulfide bridge. A helical membrane pass occupies residues 111 to 132; sequence LVMTLDGINQFTSIFCLMVMSV. At 133 to 154 the chain is on the cytoplasmic side; that stretch reads DRYLAVVHPLRSARWRRPRVAK. A helical transmembrane segment spans residues 155 to 175; the sequence is LASAAVWVFSLLMSLPLLVFA. Residues 176–195 are Extracellular-facing; that stretch reads DVQEGWGTCNLSWPEPVGLW. Asn-185 is a glycosylation site (N-linked (GlcNAc...) asparagine). Residues 196–220 traverse the membrane as a helical segment; that stretch reads GAAFITYTSVLGFFGPLLVICLCYL. Topologically, residues 221-246 are cytoplasmic; the sequence is LIVVKVKAAGMRVGSSRRRRSERKVT. The helical transmembrane segment at 247-272 threads the bilayer; that stretch reads RMVVVVVLVFVGCWLPFFIVNIVNLA. Topologically, residues 273–282 are extracellular; it reads FTLPEEPTSA. Residues 283-307 form a helical membrane-spanning segment; that stretch reads GLYFFVVVLSYANSCANPLLYGFLS. The Cytoplasmic portion of the chain corresponds to 308–362; sequence DNFRQSFRKALCLRRGYGVEDADAIEPRPDKSGRPQTTLPTRSCEANGLMQTSRL. Residue Cys-319 is the site of S-palmitoyl cysteine; by ZDHHC5 attachment. The interval 330–362 is disordered; sequence DAIEPRPDKSGRPQTTLPTRSCEANGLMQTSRL.

It belongs to the G-protein coupled receptor 1 family. Heterodimer with SSTR2. Heterodimerization with SSTR2 increases cell growth inhibition activity of SSTR2. In terms of processing, palmitoylated at Cys-319 by ZDHHC5, but not ZDHHC8. Palmitoylation creates an additional intracellular loop which is thought to be important for efficient coupling to G-proteins and may target the protein to lipid rafts. Expressed in adult brain but not in liver, heart, spleen, or kidney.

The protein resides in the cell membrane. In terms of biological role, receptor for somatostatin-28. The activity of this receptor is mediated by G proteins which inhibit adenylyl cyclase. Increases cell growth inhibition activity of SSTR2 following heterodimerization. This Mus musculus (Mouse) protein is Somatostatin receptor type 5 (Sstr5).